A 496-amino-acid polypeptide reads, in one-letter code: L-arabinose isomerase (496 aa).

Residues Glu302, Glu329, His346, and His445 each coordinate Mn(2+).

Belongs to the arabinose isomerase family. Mn(2+) is required as a cofactor.

The catalysed reaction is beta-L-arabinopyranose = L-ribulose. It participates in carbohydrate degradation; L-arabinose degradation via L-ribulose; D-xylulose 5-phosphate from L-arabinose (bacterial route): step 1/3. In terms of biological role, catalyzes the conversion of L-arabinose to L-ribulose. The sequence is that of L-arabinose isomerase from Thermotoga neapolitana (strain ATCC 49049 / DSM 4359 / NBRC 107923 / NS-E).